A 909-amino-acid chain; its full sequence is ABC transporter B family member 1 (909 aa).

The segment at 1 to 36 (MTKKNFNDEENESLLETYNKQQQKQSISTTNRSDQK) is disordered. A compositionally biased stretch (polar residues) spans 14–36 (LLETYNKQQQKQSISTTNRSDQK). Residues 85–105 (LFIQIVSLVILAGYLISINAL) traverse the membrane as a helical segment. Low complexity predominate over residues 125–134 (TDSGSVSPTS). The tract at residues 125 to 147 (TDSGSVSPTSTPSPTPTPTPSPT) is disordered. Residues 135–145 (TPSPTPTPTPS) are compositionally biased toward pro residues. 8 helical membrane passes run 182 to 202 (FSTF…LLLI), 206 to 226 (SFIY…YNVI), 275 to 295 (IIIV…VLHI), 347 to 367 (LPII…SLAM), 392 to 412 (LALV…SWLF), 480 to 500 (VILL…IVPV), 572 to 592 (GVFS…IVYV), and 607 to 627 (LTSF…ISSL). One can recognise an ABC transmembrane type-1 domain in the interval 350–633 (ILAAMVALVF…ISSLMTDFLK (284 aa)). The region spanning 666-902 (IELKDVEFSY…TDGIYHNLVK (237 aa)) is the ABC transporter domain. 701 to 708 (GPSGGGKS) is a binding site for ATP.

The protein belongs to the ABC transporter superfamily. ABCB family.

Its subcellular location is the membrane. The protein is ABC transporter B family member 1 (abcB1) of Dictyostelium discoideum (Social amoeba).